Here is a 237-residue protein sequence, read N- to C-terminus: Ribose-5-phosphate isomerase A (237 aa).

Residues 30 to 33, 87 to 90, and 100 to 103 each bind substrate; these read SGST, DGAD, and KGGG. Glu109 (proton acceptor) is an active-site residue. Lys127 provides a ligand contact to substrate.

This sequence belongs to the ribose 5-phosphate isomerase family. As to quaternary structure, homodimer.

It catalyses the reaction aldehydo-D-ribose 5-phosphate = D-ribulose 5-phosphate. It participates in carbohydrate degradation; pentose phosphate pathway; D-ribose 5-phosphate from D-ribulose 5-phosphate (non-oxidative stage): step 1/1. Its function is as follows. Catalyzes the reversible conversion of ribose-5-phosphate to ribulose 5-phosphate. The protein is Ribose-5-phosphate isomerase A of Prochlorococcus marinus (strain SARG / CCMP1375 / SS120).